The primary structure comprises 205 residues: Orotate phosphoribosyltransferase (205 aa).

116 to 124 (EDIITTGGS) lines the 5-phospho-alpha-D-ribose 1-diphosphate pocket. Orotate contacts are provided by Thr120 and Arg148.

It belongs to the purine/pyrimidine phosphoribosyltransferase family. PyrE subfamily. As to quaternary structure, homodimer. The cofactor is Mg(2+).

It catalyses the reaction orotidine 5'-phosphate + diphosphate = orotate + 5-phospho-alpha-D-ribose 1-diphosphate. Its pathway is pyrimidine metabolism; UMP biosynthesis via de novo pathway; UMP from orotate: step 1/2. In terms of biological role, catalyzes the transfer of a ribosyl phosphate group from 5-phosphoribose 1-diphosphate to orotate, leading to the formation of orotidine monophosphate (OMP). The chain is Orotate phosphoribosyltransferase from Wolinella succinogenes (strain ATCC 29543 / DSM 1740 / CCUG 13145 / JCM 31913 / LMG 7466 / NCTC 11488 / FDC 602W) (Vibrio succinogenes).